A 386-amino-acid polypeptide reads, in one-letter code: SWI/SNF-related matrix-associated actin-dependent regulator of chromatin subfamily B member 1 (386 aa).

Residues 1-114 are DNA-binding; the sequence is MMMMALSKTF…DEKYKAVSIS (114 aa).

The protein belongs to the SNF5 family. In terms of assembly, component of the multiprotein chromatin-remodeling complexes SWI/SNF. Component of neural progenitors-specific chromatin remodeling complex (npBAF complex) and the neuron-specific chromatin remodeling complex (nBAF complex). Component of the BAF (SWI/SNF) chromatin remodeling complex. Component of the SWI/SNF-B (PBAF) chromatin remodeling complex. Binds to double-stranded DNA.

It is found in the nucleus. Functionally, involved in chromatin-remodeling. Core component of the BAF (SWI/SNF) complex. This ATP-dependent chromatin-remodeling complex plays important roles in cell proliferation and differentiation, in cellular antiviral activities and inhibition of tumor formation. Belongs to the neural progenitors-specific chromatin remodeling complex (npBAF complex) and the neuron-specific chromatin remodeling complex (nBAF complex) and may play a role in neural development. The protein is SWI/SNF-related matrix-associated actin-dependent regulator of chromatin subfamily B member 1 (SMARCB1) of Gallus gallus (Chicken).